Consider the following 230-residue polypeptide: Ribosomal RNA small subunit methyltransferase G (230 aa).

S-adenosyl-L-methionine is bound by residues Gly-74, Phe-79, 124–125 (AE), and Arg-141.

Belongs to the methyltransferase superfamily. RNA methyltransferase RsmG family.

The protein resides in the cytoplasm. Specifically methylates the N7 position of a guanine in 16S rRNA. The sequence is that of Ribosomal RNA small subunit methyltransferase G from Acholeplasma laidlawii (strain PG-8A).